Consider the following 65-residue polypeptide: Small, acid-soluble spore protein 2 (65 aa).

Belongs to the alpha/beta-type SASP family.

Functionally, SASP are bound to spore DNA. They are double-stranded DNA-binding proteins that cause DNA to change to an a-like conformation. They protect the DNA backbone from chemical and enzymatic cleavage and are thus involved in dormant spore's high resistance to UV light. This Bacillus cereus protein is Small, acid-soluble spore protein 2 (sasP-2).